Reading from the N-terminus, the 239-residue chain is Ribonuclease 3 (239 aa).

Residues 12–137 (RAKLEGLIGH…LIAAIYLDGG (126 aa)) enclose the RNase III domain. Position 50 (E50) interacts with Mg(2+). Residue D54 is part of the active site. D123 and E126 together coordinate Mg(2+). E126 is an active-site residue. Positions 162-231 (DAKTELQEWS…ATKMLEREGI (70 aa)) constitute a DRBM domain.

The protein belongs to the ribonuclease III family. As to quaternary structure, homodimer. Mg(2+) serves as cofactor.

The protein resides in the cytoplasm. The catalysed reaction is Endonucleolytic cleavage to 5'-phosphomonoester.. In terms of biological role, digests double-stranded RNA. Involved in the processing of primary rRNA transcript to yield the immediate precursors to the large and small rRNAs (23S and 16S). Processes some mRNAs, and tRNAs when they are encoded in the rRNA operon. Processes pre-crRNA and tracrRNA of type II CRISPR loci if present in the organism. The sequence is that of Ribonuclease 3 from Rhizobium johnstonii (strain DSM 114642 / LMG 32736 / 3841) (Rhizobium leguminosarum bv. viciae).